We begin with the raw amino-acid sequence, 439 residues long: Glutamate--tRNA ligase 2 (439 aa).

The 'HIGH' region signature appears at 9–19 (PSPTGHLHVGN). A 'KMSKS' region motif is present at residues 233-237 (KLSKR). Lys236 is an ATP binding site.

Belongs to the class-I aminoacyl-tRNA synthetase family. Glutamate--tRNA ligase type 1 subfamily. In terms of assembly, monomer.

It is found in the cytoplasm. It carries out the reaction tRNA(Glu) + L-glutamate + ATP = L-glutamyl-tRNA(Glu) + AMP + diphosphate. Functionally, catalyzes the attachment of glutamate to tRNA(Glu) in a two-step reaction: glutamate is first activated by ATP to form Glu-AMP and then transferred to the acceptor end of tRNA(Glu). This Sphingopyxis alaskensis (strain DSM 13593 / LMG 18877 / RB2256) (Sphingomonas alaskensis) protein is Glutamate--tRNA ligase 2.